A 191-amino-acid chain; its full sequence is Small ribosomal subunit protein uS7 (191 aa).

This sequence belongs to the universal ribosomal protein uS7 family. Part of the 30S ribosomal subunit.

In terms of biological role, one of the primary rRNA binding proteins, it binds directly to 16S rRNA where it nucleates assembly of the head domain of the 30S subunit. Is located at the subunit interface close to the decoding center. The polypeptide is Small ribosomal subunit protein uS7 (Methanocaldococcus jannaschii (strain ATCC 43067 / DSM 2661 / JAL-1 / JCM 10045 / NBRC 100440) (Methanococcus jannaschii)).